The chain runs to 607 residues: UvrABC system protein C (607 aa).

Positions 14–93 (HKPGVYLMLD…IKKHKPRYNI (80 aa)) constitute a GIY-YIG domain. One can recognise a UVR domain in the interval 203–238 (RDLLAELKRQMLQASERLNFEQAGQFRDQIRALKTT).

Belongs to the UvrC family. As to quaternary structure, interacts with UvrB in an incision complex.

It localises to the cytoplasm. In terms of biological role, the UvrABC repair system catalyzes the recognition and processing of DNA lesions. UvrC both incises the 5' and 3' sides of the lesion. The N-terminal half is responsible for the 3' incision and the C-terminal half is responsible for the 5' incision. The protein is UvrABC system protein C of Desulfotalea psychrophila (strain LSv54 / DSM 12343).